The following is a 185-amino-acid chain: Ribosome-recycling factor (185 aa).

This sequence belongs to the RRF family.

Its subcellular location is the cytoplasm. Its function is as follows. Responsible for the release of ribosomes from messenger RNA at the termination of protein biosynthesis. May increase the efficiency of translation by recycling ribosomes from one round of translation to another. The chain is Ribosome-recycling factor from Vibrio vulnificus (strain YJ016).